The sequence spans 753 residues: Transcription factor SOX-30 (753 aa).

2 disordered regions span residues 1-45 and 137-161; these read MERA…TLSA and AKKQ…TGPR. A compositionally biased stretch (pro residues) spans 7–23; it reads EPPPQPRPLRPAPPPLP. The HMG box DNA-binding region spans 337 to 405; it reads VKRPMNAFMV…KHREEFPGWV (69 aa). 2 disordered regions span residues 514 to 575 and 726 to 753; these read TGPS…SPCP and PTST…LRDL. Composition is skewed to polar residues over residues 531–563 and 726–739; these read TVKQ…STIQ and PTST…VNVT.

In terms of assembly, interacts with CTNNB1, competitively inhibiting CTNNB1-TCF7L2/TCF4 interaction.

It is found in the nucleus. It localises to the cytoplasm. In terms of biological role, acts both as a transcriptional activator and a repressor. Binds to the DNA sequence 5'-ACAAT-3' and shows a preference for guanine residues surrounding this core motif. Binds to its own promoter and activates its own transcription. Required to activate the expression of postmeiotic genes involved in spermiogenesis. Binds to the promoter region of CTNNB1 and represses its transcription which leads to inhibition of Wnt signaling. Also inhibits Wnt signaling by binding to the CTNNB1 protein, preventing interaction of CTNNB1 with TCF7L2/TCF4. The polypeptide is Transcription factor SOX-30 (SOX30) (Homo sapiens (Human)).